Consider the following 186-residue polypeptide: Small ribosomal subunit protein uS7 (186 aa).

This sequence belongs to the universal ribosomal protein uS7 family. In terms of assembly, part of the 30S ribosomal subunit.

Its function is as follows. One of the primary rRNA binding proteins, it binds directly to 16S rRNA where it nucleates assembly of the head domain of the 30S subunit. Is located at the subunit interface close to the decoding center. The protein is Small ribosomal subunit protein uS7 of Methanococcoides burtonii (strain DSM 6242 / NBRC 107633 / OCM 468 / ACE-M).